The sequence spans 179 residues: Disulfide bond formation protein B (179 aa).

Topologically, residues 1–14 (MLSYFKELSLNRTA) are cytoplasmic. The helical transmembrane segment at 15 to 31 (WLLLAFVAFALEASAIY) threads the bilayer. Residues 32–49 (FQYGMGLVPCVMCVYERL) lie on the Periplasmic side of the membrane. Residues Cys-41 and Cys-44 are joined by a disulfide bond. A helical membrane pass occupies residues 50–65 (AIFGLLIAGLVGAISP). Topologically, residues 66 to 72 (RFFLTRW) are cytoplasmic. The chain crosses the membrane as a helical span at residues 73–90 (LALLLWGFSAFKGLALAI). At 91 to 146 (KHHDYQANPSPWNQCEFKPEFPQTMPFDQWFPSIFAPGPVNCSEKQWEMFGLGMPE) the chain is on the periplasmic side. The cysteines at positions 105 and 132 are disulfide-linked. The helical transmembrane segment at 147–165 (WLILAFSIFALMFVIVLLS) threads the bilayer. Topologically, residues 166-179 (QFKRAKPQYRSVFR) are cytoplasmic.

It belongs to the DsbB family.

It localises to the cell inner membrane. Its function is as follows. Required for disulfide bond formation in some periplasmic proteins. Acts by oxidizing the DsbA protein. This chain is Disulfide bond formation protein B, found in Actinobacillus pleuropneumoniae serotype 5b (strain L20).